A 243-amino-acid polypeptide reads, in one-letter code: Probable transcriptional regulatory protein Bpet3099 (243 aa).

The tract at residues 1–21 (MAGHSKWANIQHRKGRQDAKR) is disordered.

The protein belongs to the TACO1 family.

The protein resides in the cytoplasm. The protein is Probable transcriptional regulatory protein Bpet3099 of Bordetella petrii (strain ATCC BAA-461 / DSM 12804 / CCUG 43448).